Consider the following 309-residue polypeptide: Pyridoxal kinase (309 aa).

T2 carries the post-translational modification N-acetylthreonine; in Pyridoxal kinase, N-terminally processed. Residues S23 and T58 each contribute to the pyridoxal site. T58 is a binding site for pyridoxal 5'-phosphate. D124 is a binding site for ATP. A Na(+)-binding site is contributed by D124. Position 129 (D129) interacts with Mg(2+). T155 serves as a coordination point for Na(+). Residues 157–160 (NQFE), 193–194 (TS), 225–227 (IPA), and T232 contribute to the ATP site. T193 provides a ligand contact to Na(+). Pyridoxal 5'-phosphate is bound at residue 233–234 (GD). The active-site Proton acceptor is D234.

This sequence belongs to the pyridoxine kinase family. As to quaternary structure, homodimer. It depends on Zn(2+) as a cofactor. Expressed ubiquitously in leaves, stems, roots, flowers and siliques. Present in root hairs and other tip-growing cells such as papillar cells on the top of stigma.

It catalyses the reaction pyridoxal + ATP = pyridoxal 5'-phosphate + ADP + H(+). The protein operates within cofactor metabolism; pyridoxal 5'-phosphate salvage; pyridoxal 5'-phosphate from pyridoxal: step 1/1. Catalyzes the transfer of a phosphate group from ATP to the 5-hydroxylmethyl group of pyridoxal to form the biologically active pyridoxal phosphate, an active form of vitamin B6. Required for Na(+) and K(+) homeostasis and for salt tolerance. Involved in root hair development, both for initiation and tip growth. In Arabidopsis thaliana (Mouse-ear cress), this protein is Pyridoxal kinase.